The chain runs to 36 residues: Ostricacin-1 (36 aa).

Intrachain disulfides connect Cys-3/Cys-29, Cys-8/Cys-23, and Cys-13/Cys-30.

The protein resides in the secreted. Functionally, has antibacterial activity against the Gram-positive bacteria S.aureus 1056 MRSA (MIC=1.25 ug/ml) and S.aureus NCTC 4163 (MIC=6.7 ug/ml), and the Gram-negative bacteria E.coli O157:H7 (MIC=0.96 ug/ml) and E.coli 0111 (MIC=6.7 ug/ml). Does not have antifungal activity against the yeast C.albicans 3153A. The chain is Ostricacin-1 from Struthio camelus (Common ostrich).